Consider the following 181-residue polypeptide: Adenylate kinase (181 aa).

10–15 (GAGKGT) contacts ATP. Residues 30–59 (STGDLFRANISQGTELGKQAQEYMDAGKLV) form an NMP region. AMP is bound by residues Thr31, Arg36, 57-59 (KLV), 85-88 (GFPR), and Gln92. The LID stretch occupies residues 126-132 (SRGRNDD). Arg127 serves as a coordination point for ATP. AMP-binding residues include Arg129 and Arg140. An ATP-binding site is contributed by Gly166.

It belongs to the adenylate kinase family. Monomer.

It localises to the cytoplasm. It catalyses the reaction AMP + ATP = 2 ADP. It functions in the pathway purine metabolism; AMP biosynthesis via salvage pathway; AMP from ADP: step 1/1. Its function is as follows. Catalyzes the reversible transfer of the terminal phosphate group between ATP and AMP. Plays an important role in cellular energy homeostasis and in adenine nucleotide metabolism. This is Adenylate kinase from Corynebacterium urealyticum (strain ATCC 43042 / DSM 7109).